Reading from the N-terminus, the 141-residue chain is HTH-type transcriptional regulator MntR (141 aa).

Positions 1–63 (MPTPSMEDYI…YEKYRGLVLT (63 aa)) constitute an HTH dtxR-type domain. Positions 8, 11, 77, 99, 102, and 103 each coordinate Mn(2+).

This sequence belongs to the DtxR/MntR family. As to quaternary structure, homodimer.

It localises to the cytoplasm. DNA binding is strongly activated by Mn(2+). Functionally, central regulator of manganese homeostasis. The polypeptide is HTH-type transcriptional regulator MntR (Geobacillus kaustophilus (strain HTA426)).